The primary structure comprises 355 residues: Blue-sensitive opsin (355 aa).

At 1 to 36 (MNGTEGINFYVPLSNKTGLVRSPFEYPQYYLAEPWK) the chain is on the extracellular side. 2 N-linked (GlcNAc...) asparagine glycosylation sites follow: asparagine 2 and asparagine 15. The helical transmembrane segment at 37–61 (YKVVCCYIFFLIFTGLPINILTLLV) threads the bilayer. The Cytoplasmic segment spans residues 62–73 (TFKHKKLRQPLN). The helical transmembrane segment at 74 to 98 (YILVNLAVADLFMACFGFTVTFYTA) threads the bilayer. Over 99-113 (WNGYFIFGPIGCAIE) the chain is Extracellular. Cysteines 110 and 187 form a disulfide. A helical membrane pass occupies residues 114 to 133 (GFFATLGGQVALWSLVVLAI). Residues 134–152 (ERYIVVCKPMGNFRFSATH) are Cytoplasmic-facing. A helical membrane pass occupies residues 153 to 176 (ALMGISFTWFMSFSCAAPPLLGWS). The Extracellular segment spans residues 177–202 (RYIPEGMQCSCGPDYYTLNPDYHNES). An N-linked (GlcNAc...) asparagine glycan is attached at asparagine 200. A helical transmembrane segment spans residues 203–230 (YVLYMFGVHFVIPVVVIFFSYGRLICKV). At 231–252 (REAAAQQQESASTQKAEREVTR) the chain is on the cytoplasmic side. The chain crosses the membrane as a helical span at residues 253 to 276 (MVILMVLGFLLAWTPYAMVAFWIF). Topologically, residues 277–284 (TNKGVDFS) are extracellular. The chain crosses the membrane as a helical span at residues 285–309 (ATLMSVPAFFSKSSSLYNPIIYVLM). Lysine 296 bears the N6-(retinylidene)lysine mark. The Cytoplasmic portion of the chain corresponds to 310–355 (NKQFRNCMITTICCGKNPFGDEDVSSSVSQSKTEVSSVSSSQVSPA). 2 S-palmitoyl cysteine lipidation sites follow: cysteine 322 and cysteine 323. Residues 332-355 (DVSSSVSQSKTEVSSVSSSQVSPA) are disordered. The segment covering 334-355 (SSSVSQSKTEVSSVSSSQVSPA) has biased composition (low complexity).

This sequence belongs to the G-protein coupled receptor 1 family. Opsin subfamily. In terms of processing, phosphorylated on some or all of the serine and threonine residues present in the C-terminal region.

The protein resides in the membrane. Visual pigments are the light-absorbing molecules that mediate vision. They consist of an apoprotein, opsin, covalently linked to cis-retinal. This opsin uses a vitamin A2 chromophore. This is Blue-sensitive opsin from Anolis carolinensis (Green anole).